An 80-amino-acid chain; its full sequence is Large ribosomal subunit protein uL24 (80 aa).

The disordered stretch occupies residues 53–80; it reads HMKPTQSHPQGSIIEREFPIHASNVKKS.

Belongs to the universal ribosomal protein uL24 family. Part of the 50S ribosomal subunit.

In terms of biological role, one of two assembly initiator proteins, it binds directly to the 5'-end of the 23S rRNA, where it nucleates assembly of the 50S subunit. Its function is as follows. One of the proteins that surrounds the polypeptide exit tunnel on the outside of the subunit. The chain is Large ribosomal subunit protein uL24 from Chlorobium limicola (strain DSM 245 / NBRC 103803 / 6330).